A 571-amino-acid polypeptide reads, in one-letter code: Methionine--tRNA ligase (571 aa).

Residues 10 to 20 carry the 'HIGH' region motif; it reads PYVNAVPHLGN. Residues Cys143, Cys146, Cys156, and Cys159 each contribute to the Zn(2+) site. The short motif at 333-337 is the 'KMSKS' region element; it reads KFSKS. Lys336 lines the ATP pocket.

The protein belongs to the class-I aminoacyl-tRNA synthetase family. MetG type 1 subfamily. Zn(2+) is required as a cofactor.

Its subcellular location is the cytoplasm. The enzyme catalyses tRNA(Met) + L-methionine + ATP = L-methionyl-tRNA(Met) + AMP + diphosphate. In terms of biological role, is required not only for elongation of protein synthesis but also for the initiation of all mRNA translation through initiator tRNA(fMet) aminoacylation. The sequence is that of Methionine--tRNA ligase from Sulfurisphaera tokodaii (strain DSM 16993 / JCM 10545 / NBRC 100140 / 7) (Sulfolobus tokodaii).